The following is a 487-amino-acid chain: Transmembrane protein 161B (487 aa).

Asparagine 34 is a glycosylation site (N-linked (GlcNAc...) asparagine). A helical transmembrane segment spans residues 107–127 (LVDFTVAATIVYLVTEVYYSF). N-linked (GlcNAc...) asparagine glycosylation is present at asparagine 135. Transmembrane regions (helical) follow at residues 136 to 156 (ISLV…FSLT) and 169 to 189 (SVCV…LIVT). N-linked (GlcNAc...) asparagine glycosylation occurs at asparagine 203. The next 5 membrane-spanning stretches (helical) occupy residues 228–248 (FKFF…FPGL), 265–285 (ITQT…LLWV), 305–325 (LMTE…LCVL), 367–387 (VFYY…MLLH), and 459–479 (LSFL…FGLF).

The protein belongs to the TMEM161 family.

The protein resides in the cell membrane. Essential for maintaining normal cardiac rhythm in the developing heart and for neonatal survival. Inhibits potassium and calcium currents in the cardiomyocytes, this assists in timely action potential repolarization and thereby maintains normal cardiac rhythm. This is Transmembrane protein 161B (Tmem161b) from Mus musculus (Mouse).